The chain runs to 517 residues: GMP synthase [glutamine-hydrolyzing] (517 aa).

Residues 11–202 (KIIVLDYGSQ…AFDICKAEAN (192 aa)) enclose the Glutamine amidotransferase type-1 domain. The active-site Nucleophile is Cys-88. Residues His-176 and Glu-178 contribute to the active site. The 190-residue stretch at 203–392 (WSMDDFITKQ…LGMPHALVWR (190 aa)) folds into the GMPS ATP-PPase domain. 230–236 (SGGVDSS) contributes to the ATP binding site.

Homodimer.

It catalyses the reaction XMP + L-glutamine + ATP + H2O = GMP + L-glutamate + AMP + diphosphate + 2 H(+). The protein operates within purine metabolism; GMP biosynthesis; GMP from XMP (L-Gln route): step 1/1. In terms of biological role, catalyzes the synthesis of GMP from XMP. This is GMP synthase [glutamine-hydrolyzing] from Lacticaseibacillus casei (strain BL23) (Lactobacillus casei).